We begin with the raw amino-acid sequence, 572 residues long: Phosphoenolpyruvate-protein phosphotransferase (572 aa).

The Tele-phosphohistidine intermediate role is filled by histidine 191. Phosphoenolpyruvate is bound by residues arginine 298 and arginine 334. The Mg(2+) site is built by glutamate 433 and aspartate 457. Phosphoenolpyruvate is bound by residues 456–457 and arginine 467; that span reads ND. Cysteine 504 serves as the catalytic Proton donor.

Belongs to the PEP-utilizing enzyme family. As to quaternary structure, homodimer. Mg(2+) is required as a cofactor.

The protein resides in the cytoplasm. The catalysed reaction is L-histidyl-[protein] + phosphoenolpyruvate = N(pros)-phospho-L-histidyl-[protein] + pyruvate. General (non sugar-specific) component of the phosphoenolpyruvate-dependent sugar phosphotransferase system (sugar PTS). This major carbohydrate active-transport system catalyzes the phosphorylation of incoming sugar substrates concomitantly with their translocation across the cell membrane. Enzyme I transfers the phosphoryl group from phosphoenolpyruvate (PEP) to the phosphoryl carrier protein (HPr). The sequence is that of Phosphoenolpyruvate-protein phosphotransferase (ptsI) from Staphylococcus aureus (strain MRSA252).